The primary structure comprises 382 residues: uncharacterized protein (382 aa).

A run of 12 helical transmembrane segments spans residues 8-28 (VMLL…LNTL), 45-65 (MVSS…GYLI), 75-95 (YLAS…VGFW), 102-122 (FIAG…LMCS), 131-151 (LLAA…LLVS), 157-177 (LLHV…PLLF), 204-224 (LGVN…GLMP), 231-251 (GMAN…GILG), 270-290 (VQVF…AMAP), 291-311 (ALFI…AWAC), 325-345 (ALLL…AMLM), and 349-369 (SDNL…LMLL).

It belongs to the major facilitator superfamily. YcaD (TC 2.A.1.26) family.

It localises to the cell inner membrane. This is an uncharacterized protein from Salmonella newport (strain SL254).